We begin with the raw amino-acid sequence, 175 residues long: NADH-ubiquinone oxidoreductase chain 6 (175 aa).

5 consecutive transmembrane segments (helical) span residues 1 to 21 (MMTY…VGFS), 25 to 45 (SPIY…GIVL), 47 to 67 (FGGS…MLVV), 88 to 108 (AVLG…CYIL), and 149 to 169 (YGTW…LVIM).

It belongs to the complex I subunit 6 family. Core subunit of respiratory chain NADH dehydrogenase (Complex I) which is composed of 45 different subunits.

It localises to the mitochondrion inner membrane. It catalyses the reaction a ubiquinone + NADH + 5 H(+)(in) = a ubiquinol + NAD(+) + 4 H(+)(out). In terms of biological role, core subunit of the mitochondrial membrane respiratory chain NADH dehydrogenase (Complex I) which catalyzes electron transfer from NADH through the respiratory chain, using ubiquinone as an electron acceptor. Essential for the catalytic activity and assembly of complex I. This chain is NADH-ubiquinone oxidoreductase chain 6 (MT-ND6), found in Phoca vitulina (Harbor seal).